Reading from the N-terminus, the 204-residue chain is Dephospho-CoA kinase (204 aa).

In terms of domain architecture, DPCK spans 3–200; the sequence is VVAITGGIGS…ETYMAFASQQ (198 aa). 11 to 16 serves as a coordination point for ATP; that stretch reads GSGKTT.

This sequence belongs to the CoaE family.

It is found in the cytoplasm. It carries out the reaction 3'-dephospho-CoA + ATP = ADP + CoA + H(+). It participates in cofactor biosynthesis; coenzyme A biosynthesis; CoA from (R)-pantothenate: step 5/5. Its function is as follows. Catalyzes the phosphorylation of the 3'-hydroxyl group of dephosphocoenzyme A to form coenzyme A. In Aeromonas hydrophila, this protein is Dephospho-CoA kinase.